A 450-amino-acid chain; its full sequence is tRNA-2-methylthio-N(6)-dimethylallyladenosine synthase (450 aa).

One can recognise an MTTase N-terminal domain in the interval 14-132 (GEFFIETWGC…FPNYLNEVKK (119 aa)). [4Fe-4S] cluster contacts are provided by C23, C59, C93, C169, C173, and C176. Residues 155–385 (RKNSMKAFVT…VEVVNEISAK (231 aa)) form the Radical SAM core domain. Residues 388–450 (KAYEGKIEEV…NSFSLTGEEI (63 aa)) form the TRAM domain.

Belongs to the methylthiotransferase family. MiaB subfamily. In terms of assembly, monomer. It depends on [4Fe-4S] cluster as a cofactor.

Its subcellular location is the cytoplasm. It catalyses the reaction N(6)-dimethylallyladenosine(37) in tRNA + (sulfur carrier)-SH + AH2 + 2 S-adenosyl-L-methionine = 2-methylsulfanyl-N(6)-dimethylallyladenosine(37) in tRNA + (sulfur carrier)-H + 5'-deoxyadenosine + L-methionine + A + S-adenosyl-L-homocysteine + 2 H(+). Its function is as follows. Catalyzes the methylthiolation of N6-(dimethylallyl)adenosine (i(6)A), leading to the formation of 2-methylthio-N6-(dimethylallyl)adenosine (ms(2)i(6)A) at position 37 in tRNAs that read codons beginning with uridine. This is tRNA-2-methylthio-N(6)-dimethylallyladenosine synthase from Clostridium botulinum (strain Loch Maree / Type A3).